The following is a 367-amino-acid chain: Alanine racemase (367 aa).

The active-site Proton acceptor; specific for D-alanine is the lysine 34. At lysine 34 the chain carries N6-(pyridoxal phosphate)lysine. Arginine 129 serves as a coordination point for substrate. Tyrosine 251 (proton acceptor; specific for L-alanine) is an active-site residue. Position 299 (methionine 299) interacts with substrate.

The protein belongs to the alanine racemase family. Pyridoxal 5'-phosphate is required as a cofactor.

The catalysed reaction is L-alanine = D-alanine. It functions in the pathway amino-acid biosynthesis; D-alanine biosynthesis; D-alanine from L-alanine: step 1/1. In terms of biological role, catalyzes the interconversion of L-alanine and D-alanine. May also act on other amino acids. This is Alanine racemase (alr) from Thiobacillus denitrificans (strain ATCC 25259 / T1).